Consider the following 498-residue polypeptide: ATP synthase subunit beta, chloroplastic (498 aa).

172–179 is a binding site for ATP; the sequence is GGAGVGKT.

The protein belongs to the ATPase alpha/beta chains family. F-type ATPases have 2 components, CF(1) - the catalytic core - and CF(0) - the membrane proton channel. CF(1) has five subunits: alpha(3), beta(3), gamma(1), delta(1), epsilon(1). CF(0) has four main subunits: a(1), b(1), b'(1) and c(9-12).

It is found in the plastid. The protein resides in the chloroplast thylakoid membrane. The catalysed reaction is ATP + H2O + 4 H(+)(in) = ADP + phosphate + 5 H(+)(out). Functionally, produces ATP from ADP in the presence of a proton gradient across the membrane. The catalytic sites are hosted primarily by the beta subunits. The sequence is that of ATP synthase subunit beta, chloroplastic from Myristica fragrans (Nutmeg).